A 451-amino-acid polypeptide reads, in one-letter code: UDP-glucosyltransferase 74AE2 (451 aa).

The active-site Proton acceptor is the His-17. Residue His-17 coordinates an anthocyanidin. Asp-108 acts as the Charge relay in catalysis. The UDP-alpha-D-glucose site is built by Thr-130, Gln-330, His-345, Trp-348, Asn-349, Ser-350, Glu-353, Asp-369, and Gln-370.

It belongs to the UDP-glycosyltransferase family. In terms of tissue distribution, expressed at higher levels in roots than in leaves.

It carries out the reaction (20S)-ginsenoside C-K + UDP-alpha-D-glucose = (20S)-ginsenoside F2 + UDP + H(+). The catalysed reaction is (20S)-protopanaxadiol + UDP-alpha-D-glucose = (20S)-ginsenoside Rh2 + UDP + H(+). The protein operates within secondary metabolite biosynthesis; terpenoid biosynthesis. In terms of biological role, component of the dammarane-type triterpene saponins (e.g. PPD-type ginsenosides or panaxosides) biosynthetic pathway. Glycosyltransferase that catalyzes the biosynthesis of ginsenoside Rh2 from protopanaxadiol (PPD) and the conversion of compound K to ginsenoside F2. This chain is UDP-glucosyltransferase 74AE2, found in Panax ginseng (Korean ginseng).